The chain runs to 203 residues: LexA repressor (203 aa).

Residues 28-47 constitute a DNA-binding region (H-T-H motif); it reads IREIGDEFGITAKGAYDHLK. Catalysis depends on for autocatalytic cleavage activity residues Ser127 and Lys164.

It belongs to the peptidase S24 family. Homodimer.

It catalyses the reaction Hydrolysis of Ala-|-Gly bond in repressor LexA.. In terms of biological role, represses a number of genes involved in the response to DNA damage (SOS response), including recA and lexA. In the presence of single-stranded DNA, RecA interacts with LexA causing an autocatalytic cleavage which disrupts the DNA-binding part of LexA, leading to derepression of the SOS regulon and eventually DNA repair. In Leptospira interrogans serogroup Icterohaemorrhagiae serovar copenhageni (strain Fiocruz L1-130), this protein is LexA repressor.